Here is a 571-residue protein sequence, read N- to C-terminus: Proline--tRNA ligase (571 aa).

The protein belongs to the class-II aminoacyl-tRNA synthetase family. ProS type 1 subfamily. Homodimer.

The protein resides in the cytoplasm. The enzyme catalyses tRNA(Pro) + L-proline + ATP = L-prolyl-tRNA(Pro) + AMP + diphosphate. Its function is as follows. Catalyzes the attachment of proline to tRNA(Pro) in a two-step reaction: proline is first activated by ATP to form Pro-AMP and then transferred to the acceptor end of tRNA(Pro). As ProRS can inadvertently accommodate and process non-cognate amino acids such as alanine and cysteine, to avoid such errors it has two additional distinct editing activities against alanine. One activity is designated as 'pretransfer' editing and involves the tRNA(Pro)-independent hydrolysis of activated Ala-AMP. The other activity is designated 'posttransfer' editing and involves deacylation of mischarged Ala-tRNA(Pro). The misacylated Cys-tRNA(Pro) is not edited by ProRS. This chain is Proline--tRNA ligase, found in Pasteurella multocida (strain Pm70).